A 72-amino-acid polypeptide reads, in one-letter code: Putative membrane protein insertion efficiency factor (72 aa).

The protein belongs to the UPF0161 family.

It localises to the cell inner membrane. Its function is as follows. Could be involved in insertion of integral membrane proteins into the membrane. This Trichodesmium erythraeum (strain IMS101) protein is Putative membrane protein insertion efficiency factor.